The following is a 413-amino-acid chain: Hemolin (413 aa).

A signal peptide spans 1-18 (MASKSLVVLSACIIIGSA). Ig-like C2-type domains follow at residues 25–112 (PVLK…RVIS), 122–211 (PAKT…GEVR), 233–322 (PQYL…LKVT), and 327–413 (PKYV…VQVN). 4 disulfide bridges follow: Cys-46–Cys-97, Cys-140–Cys-199, Cys-252–Cys-305, and Cys-349–Cys-395. N-linked (GlcNAc...) asparagine glycosylation occurs at Asn-283.

The protein belongs to the hemolin family. In terms of tissue distribution, expressed in larval bristles.

It is found in the secreted. With respect to regulation, increased activity in presence of phospholipids (low concentrations) and calcium ions. Inhibited by PMSF. Not affected by EDTA and E-64. Its function is as follows. Bristle toxin involved in caterpillar defense by participating in hemorrhagic syndrome characterized by a consumptive coagulopathy. Exhibits procoagulant activity through selective factor X proteolytic activation. Activates factor X in a dose- and time-dependent manner but does not activate gamma-carboxyglutamic acid domainless factor X. Its activity does not depend on calcium ions. Also functions as a growth stimulator and an inhibitor of cellular death for endothelial cells. In vitro, increases proliferation of human umbilical vein endothelial cells (HUVEC) and inhibits the apoptosis induced by starvation. Also increases slightly the complement decay-accelerating factor (CD55), which protects cells from complement-mediated lysis. On the other hand, does not alter the release or expression of von Willebrand factor (VWF), tissue factor (F3), intercellular adhesion molecule-1 (ICAM1), interleukin-8 (CXCL8), and prostacyclin. Does not show fibrinolytic or fibrinogenolytic activities. This chain is Hemolin, found in Lonomia obliqua (Moth).